The primary structure comprises 552 residues: Lysine--tRNA ligase (552 aa).

A 'HIGH' region motif is present at residues 72–80 (PSGLPHLGT). The short motif at 320-324 (KISKS) is the 'KMSKS' region element. An ATP-binding site is contributed by lysine 323.

This sequence belongs to the class-I aminoacyl-tRNA synthetase family.

The protein localises to the cytoplasm. It carries out the reaction tRNA(Lys) + L-lysine + ATP = L-lysyl-tRNA(Lys) + AMP + diphosphate. The polypeptide is Lysine--tRNA ligase (Caulobacter vibrioides (strain ATCC 19089 / CIP 103742 / CB 15) (Caulobacter crescentus)).